The chain runs to 202 residues: Holliday junction branch migration complex subunit RuvA (202 aa).

Residues 1–64 are domain I; it reads MIGRLRGTLA…EDAQLLYGFA (64 aa). The interval 65 to 143 is domain II; sequence GKRERDFFRE…AWETSPAMFA (79 aa). The flexible linker stretch occupies residues 144–154; that stretch reads LVPNQPDGPAP. The interval 154–202 is domain III; sequence PVNTAENDAVSALISLGYKPQEASKAISAIKEKGLSSEDMIRRALKGMI.

It belongs to the RuvA family. In terms of assembly, homotetramer. Forms an RuvA(8)-RuvB(12)-Holliday junction (HJ) complex. HJ DNA is sandwiched between 2 RuvA tetramers; dsDNA enters through RuvA and exits via RuvB. An RuvB hexamer assembles on each DNA strand where it exits the tetramer. Each RuvB hexamer is contacted by two RuvA subunits (via domain III) on 2 adjacent RuvB subunits; this complex drives branch migration. In the full resolvosome a probable DNA-RuvA(4)-RuvB(12)-RuvC(2) complex forms which resolves the HJ.

Its subcellular location is the cytoplasm. In terms of biological role, the RuvA-RuvB-RuvC complex processes Holliday junction (HJ) DNA during genetic recombination and DNA repair, while the RuvA-RuvB complex plays an important role in the rescue of blocked DNA replication forks via replication fork reversal (RFR). RuvA specifically binds to HJ cruciform DNA, conferring on it an open structure. The RuvB hexamer acts as an ATP-dependent pump, pulling dsDNA into and through the RuvAB complex. HJ branch migration allows RuvC to scan DNA until it finds its consensus sequence, where it cleaves and resolves the cruciform DNA. This Pseudomonas fluorescens (strain Pf0-1) protein is Holliday junction branch migration complex subunit RuvA.